A 131-amino-acid polypeptide reads, in one-letter code: Small ribosomal subunit protein uS11 (131 aa).

Belongs to the universal ribosomal protein uS11 family. As to quaternary structure, part of the 30S ribosomal subunit. Interacts with proteins S7 and S18. Binds to IF-3.

Its function is as follows. Located on the platform of the 30S subunit, it bridges several disparate RNA helices of the 16S rRNA. Forms part of the Shine-Dalgarno cleft in the 70S ribosome. The polypeptide is Small ribosomal subunit protein uS11 (Neisseria gonorrhoeae (strain ATCC 700825 / FA 1090)).